Reading from the N-terminus, the 156-residue chain is Transcriptional repressor NrdR (156 aa).

Residues 3–34 (CPFCQHDDTQVLDTRISEEGDSIRRRRRCVSC) fold into a zinc finger. The 91-residue stretch at 49–139 (PVIVKKNGSR…VYKSFEDVAE (91 aa)) folds into the ATP-cone domain.

The protein belongs to the NrdR family. Zn(2+) is required as a cofactor.

Its function is as follows. Negatively regulates transcription of bacterial ribonucleotide reductase nrd genes and operons by binding to NrdR-boxes. This is Transcriptional repressor NrdR from Herminiimonas arsenicoxydans.